The following is a 970-amino-acid chain: Translation initiation factor IF-2 (970 aa).

Disordered stretches follow at residues 54-270 (KILA…TATQ) and 328-348 (DKRR…KSLS). Residues 87–96 (QEAQPVEAQP) show a composition bias toward low complexity. Polar residues predominate over residues 98-112 (YEEQPSYEEQPSYEE). Residues 121–149 (EVAAEAAPEPVEEPASSPEGGAPAGGAEP) are compositionally biased toward low complexity. 2 stretches are compositionally biased toward pro residues: residues 150-160 (QPAPEAPPPSA) and 168-182 (PSAP…PAPS). The segment covering 183-253 (VPAGAQPPGA…PHGPGAQPGQ (71 aa)) has biased composition (low complexity). In terms of domain architecture, tr-type G spans 469-638 (IRPPVVTVMG…ALQSEVLELK (170 aa)). Residues 478–485 (GHVDHGKT) form a G1 region. 478–485 (GHVDHGKT) serves as a coordination point for GTP. A G2 region spans residues 503–507 (GITQH). The interval 524 to 527 (DTPG) is G3. Residues 524–528 (DTPGH) and 578–581 (NKID) each bind GTP. Residues 578-581 (NKID) form a G4 region. Residues 614-616 (SAR) are G5.

This sequence belongs to the TRAFAC class translation factor GTPase superfamily. Classic translation factor GTPase family. IF-2 subfamily.

The protein localises to the cytoplasm. Functionally, one of the essential components for the initiation of protein synthesis. Protects formylmethionyl-tRNA from spontaneous hydrolysis and promotes its binding to the 30S ribosomal subunits. Also involved in the hydrolysis of GTP during the formation of the 70S ribosomal complex. This Anaeromyxobacter sp. (strain Fw109-5) protein is Translation initiation factor IF-2.